The chain runs to 322 residues: Beta-ketoacyl-[acyl-carrier-protein] synthase III (322 aa).

Catalysis depends on residues C113 and H249. Residues 250–254 form an ACP-binding region; sequence QANIR. The active site involves N279.

It belongs to the thiolase-like superfamily. FabH family. As to quaternary structure, homodimer.

The protein localises to the cytoplasm. It carries out the reaction malonyl-[ACP] + acetyl-CoA + H(+) = 3-oxobutanoyl-[ACP] + CO2 + CoA. It participates in lipid metabolism; fatty acid biosynthesis. Catalyzes the condensation reaction of fatty acid synthesis by the addition to an acyl acceptor of two carbons from malonyl-ACP. Catalyzes the first condensation reaction which initiates fatty acid synthesis and may therefore play a role in governing the total rate of fatty acid production. Possesses both acetoacetyl-ACP synthase and acetyl transacylase activities. Its substrate specificity determines the biosynthesis of branched-chain and/or straight-chain of fatty acids. This is Beta-ketoacyl-[acyl-carrier-protein] synthase III from Thioalkalivibrio sulfidiphilus (strain HL-EbGR7).